We begin with the raw amino-acid sequence, 542 residues long: CTP synthase (542 aa).

Residues 1 to 265 (MTRYVFITGG…DREVLALFGI (265 aa)) are amidoligase domain. Ser13 provides a ligand contact to CTP. Ser13 is a UTP binding site. ATP contacts are provided by residues 14–19 (SLGKGL) and Asp71. Residues Asp71 and Glu139 each contribute to the Mg(2+) site. CTP contacts are provided by residues 146-148 (DIE), 186-191 (KTKPTQ), and Lys222. Residues 186 to 191 (KTKPTQ) and Lys222 each bind UTP. 238–240 (RDV) serves as a coordination point for ATP. A Glutamine amidotransferase type-1 domain is found at 291–541 (SIAIVGKYTG…IGAAVVQSRL (251 aa)). An L-glutamine-binding site is contributed by Gly353. The Nucleophile; for glutamine hydrolysis role is filled by Cys380. L-glutamine-binding positions include 381-384 (FGMQ), Glu404, and Arg469. Catalysis depends on residues His514 and Glu516.

The protein belongs to the CTP synthase family. In terms of assembly, homotetramer.

The catalysed reaction is UTP + L-glutamine + ATP + H2O = CTP + L-glutamate + ADP + phosphate + 2 H(+). The enzyme catalyses L-glutamine + H2O = L-glutamate + NH4(+). It catalyses the reaction UTP + NH4(+) + ATP = CTP + ADP + phosphate + 2 H(+). Its pathway is pyrimidine metabolism; CTP biosynthesis via de novo pathway; CTP from UDP: step 2/2. Allosterically activated by GTP, when glutamine is the substrate; GTP has no effect on the reaction when ammonia is the substrate. The allosteric effector GTP functions by stabilizing the protein conformation that binds the tetrahedral intermediate(s) formed during glutamine hydrolysis. Inhibited by the product CTP, via allosteric rather than competitive inhibition. Functionally, catalyzes the ATP-dependent amination of UTP to CTP with either L-glutamine or ammonia as the source of nitrogen. Regulates intracellular CTP levels through interactions with the four ribonucleotide triphosphates. The chain is CTP synthase from Methylobacterium nodulans (strain LMG 21967 / CNCM I-2342 / ORS 2060).